The sequence spans 212 residues: Ribosomal RNA small subunit methyltransferase G (212 aa).

S-adenosyl-L-methionine contacts are provided by residues Gly80, Leu85, 131–132 (AE), and Arg146.

This sequence belongs to the methyltransferase superfamily. RNA methyltransferase RsmG family.

The protein localises to the cytoplasm. The enzyme catalyses guanosine(527) in 16S rRNA + S-adenosyl-L-methionine = N(7)-methylguanosine(527) in 16S rRNA + S-adenosyl-L-homocysteine. Functionally, specifically methylates the N7 position of guanine in position 527 of 16S rRNA. The chain is Ribosomal RNA small subunit methyltransferase G from Stenotrophomonas maltophilia (strain R551-3).